The following is a 255-amino-acid chain: Short chain dehydrogenase adrF (255 aa).

Positions 11, 118, 150, 154, and 183 each coordinate NADP(+). The active-site Proton acceptor is the Tyr-150. The active-site Lowers pKa of active site Tyr is the Lys-154.

It belongs to the short-chain dehydrogenases/reductases (SDR) family.

The protein operates within secondary metabolite biosynthesis; terpenoid biosynthesis. Functionally, short chain dehydrogenase; part of the gene cluster that mediates the biosynthesis of andrastins, meroterpenoid compounds that exhibit inhibitory activity against ras farnesyltransferase, suggesting that they could be promising leads for antitumor agents. The first step of the pathway is the synthesis of 3,5-dimethylorsellinic acid (DMOA) by the polyketide synthase adrD via condensation of one acetyl-CoA starter unit with 3 malonyl-CoA units and 2 methylations. DMAO is then converted to farnesyl-DMAO by the prenyltransferase adrG. The methyltransferase adrK catalyzes the methylation of the carboxyl group of farnesyl-DMAO to farnesyl-DMAO methyl ester which is further converted to epoxyfarnesyl-DMAO methyl ester by the FAD-dependent monooxygenase adrH. The terpene cyclase adrI then catalyzes the carbon skeletal rearrangement to generate the andrastin E, the first compound in the pathway having the andrastin scaffold, with the tetracyclic ring system. The post-cyclization tailoring enzymes adrF, adrE, adrJ, and adrA, are involved in the conversion of andrastin E into andrastin A. The short chain dehydrogenase adrF is responsible for the oxidation of the C-3 a hydroxyl group of andrastin E to yield the corresponding ketone, andrastin D. The ketoreductase adrE stereoselectively reduces the carbonyl moiety to reverse the stereochemistry of the C-3 position to yield andrastin F. The acetyltransferase adrJ is the acetyltransferase that attaches the acetyl group to the C-3 hydroxyl group of andrastin F to yield andrastin C. Finally, the cytochrome P450 monooxygenase adrA catalyzes two sequential oxidation reactions of the C-23 methyl group, to generate the corresponding alcohol andrastin B, and aldehyde andrastin A. This chain is Short chain dehydrogenase adrF, found in Penicillium rubens (strain ATCC 28089 / DSM 1075 / NRRL 1951 / Wisconsin 54-1255) (Penicillium chrysogenum).